A 231-amino-acid polypeptide reads, in one-letter code: Cytochrome c oxidase assembly factor 7 (231 aa).

Ala-2 bears the N-acetylalanine mark. 5 Sel1-like repeats span residues 34 to 66 (PDGCYRLVDYLEGIRKNFDEAAKVLKFNCEENQ), 68 to 104 (SDSCYKLGAYYVTGKGGLTQDLKAAARCFLMACEKPG), 108 to 146 (IAACHNVGLLAHDGQVNEDGQPDLGKARDYYTRACDGGY), 147 to 183 (TSSCFNLSAMFLQGAPGFPKDMDLACKYSMKACDLGH), and 184 to 219 (IWACANASRMYKLGDGVDKDEAKAEVLKNRAQQLHK).

It belongs to the hcp beta-lactamase family. As to quaternary structure, interacts with CHCHD4/MIA40 through transient intermolecular disulfide bonds.

Its subcellular location is the mitochondrion intermembrane space. Its function is as follows. Required for assembly of mitochondrial respiratory chain complex I and complex IV. The chain is Cytochrome c oxidase assembly factor 7 (COA7) from Homo sapiens (Human).